A 150-amino-acid chain; its full sequence is Ribosome maturation factor RimP (150 aa).

The protein belongs to the RimP family.

It localises to the cytoplasm. Its function is as follows. Required for maturation of 30S ribosomal subunits. This Thermotoga maritima (strain ATCC 43589 / DSM 3109 / JCM 10099 / NBRC 100826 / MSB8) protein is Ribosome maturation factor RimP.